The chain runs to 100 residues: Aspartyl/glutamyl-tRNA(Asn/Gln) amidotransferase subunit C (100 aa).

The protein belongs to the GatC family. In terms of assembly, heterotrimer of A, B and C subunits.

It carries out the reaction L-glutamyl-tRNA(Gln) + L-glutamine + ATP + H2O = L-glutaminyl-tRNA(Gln) + L-glutamate + ADP + phosphate + H(+). The enzyme catalyses L-aspartyl-tRNA(Asn) + L-glutamine + ATP + H2O = L-asparaginyl-tRNA(Asn) + L-glutamate + ADP + phosphate + 2 H(+). In terms of biological role, allows the formation of correctly charged Asn-tRNA(Asn) or Gln-tRNA(Gln) through the transamidation of misacylated Asp-tRNA(Asn) or Glu-tRNA(Gln) in organisms which lack either or both of asparaginyl-tRNA or glutaminyl-tRNA synthetases. The reaction takes place in the presence of glutamine and ATP through an activated phospho-Asp-tRNA(Asn) or phospho-Glu-tRNA(Gln). The chain is Aspartyl/glutamyl-tRNA(Asn/Gln) amidotransferase subunit C from Rickettsia typhi (strain ATCC VR-144 / Wilmington).